The primary structure comprises 828 residues: Phenylalanine--tRNA ligase beta subunit (828 aa).

In terms of domain architecture, tRNA-binding spans 43-161; the sequence is LSKNTNLVVG…DQIALGSNAL (119 aa). The tract at residues 203–230 is disordered; the sequence is KKKEKKTINYKTKNSKDQTNRKTTPKLN. The B5 domain occupies 436–519; sequence RTNPTISLDL…RFYGCHKLPP (84 aa). Mg(2+) contacts are provided by D497, D503, and D507. Residues 736–828 form the FDX-ACB domain; that stretch reads PKFPTVIRDL…LIKHFRIEIR (93 aa).

The protein belongs to the phenylalanyl-tRNA synthetase beta subunit family. Type 1 subfamily. As to quaternary structure, tetramer of two alpha and two beta subunits. Requires Mg(2+) as cofactor.

The protein resides in the cytoplasm. It carries out the reaction tRNA(Phe) + L-phenylalanine + ATP = L-phenylalanyl-tRNA(Phe) + AMP + diphosphate + H(+). The sequence is that of Phenylalanine--tRNA ligase beta subunit from Aster yellows witches'-broom phytoplasma (strain AYWB).